Reading from the N-terminus, the 763-residue chain is 5-methyltetrahydropteroyltriglutamate--homocysteine methyltransferase (763 aa).

Residues 16–19 (RELK) and lysine 121 each bind 5-methyltetrahydropteroyltri-L-glutamate. L-homocysteine is bound by residues 440–442 (IGS) and glutamate 493. L-methionine is bound by residues 440 to 442 (IGS) and glutamate 493. 5-methyltetrahydropteroyltri-L-glutamate is bound by residues 524 to 525 (RC) and tryptophan 570. Aspartate 608 provides a ligand contact to L-homocysteine. Aspartate 608 contributes to the L-methionine binding site. Glutamate 614 contacts 5-methyltetrahydropteroyltri-L-glutamate. Residues histidine 650, cysteine 652, and glutamate 674 each contribute to the Zn(2+) site. Catalysis depends on histidine 703, which acts as the Proton donor. Cysteine 735 contributes to the Zn(2+) binding site.

This sequence belongs to the vitamin-B12 independent methionine synthase family. Zn(2+) serves as cofactor.

The enzyme catalyses 5-methyltetrahydropteroyltri-L-glutamate + L-homocysteine = tetrahydropteroyltri-L-glutamate + L-methionine. Its pathway is amino-acid biosynthesis; L-methionine biosynthesis via de novo pathway; L-methionine from L-homocysteine (MetE route): step 1/1. Catalyzes the transfer of a methyl group from 5-methyltetrahydrofolate to homocysteine resulting in methionine formation. This Paraburkholderia phymatum (strain DSM 17167 / CIP 108236 / LMG 21445 / STM815) (Burkholderia phymatum) protein is 5-methyltetrahydropteroyltriglutamate--homocysteine methyltransferase.